A 20-amino-acid polypeptide reads, in one-letter code: N-acetyl-D-galactosamine-binding lectin subunit B (20 aa).

Disulfide-linked heterodimer of A and B chains.

In terms of biological role, gal / GalNAc-specific lectin. Agglutinates both native and trypsin-treated rabbit erythrocytes but not human erythrocytes irrespective of blood group type. This chain is N-acetyl-D-galactosamine-binding lectin subunit B, found in Iris hollandica (Dutch iris).